We begin with the raw amino-acid sequence, 132 residues long: Large ribosomal subunit protein bL19 (132 aa).

It belongs to the bacterial ribosomal protein bL19 family.

This protein is located at the 30S-50S ribosomal subunit interface and may play a role in the structure and function of the aminoacyl-tRNA binding site. The chain is Large ribosomal subunit protein bL19 from Persephonella marina (strain DSM 14350 / EX-H1).